The following is a 468-amino-acid chain: Uronate isomerase (468 aa).

The protein belongs to the metallo-dependent hydrolases superfamily. Uronate isomerase family.

The enzyme catalyses D-glucuronate = D-fructuronate. The catalysed reaction is aldehydo-D-galacturonate = keto-D-tagaturonate. It functions in the pathway carbohydrate metabolism; pentose and glucuronate interconversion. The sequence is that of Uronate isomerase from Brachyspira hyodysenteriae (strain ATCC 49526 / WA1).